The sequence spans 262 residues: 4-hydroxy-2-oxovalerate aldolase (262 aa).

The active-site Proton acceptor is the H48. Q149 lines the substrate pocket. Residue E151 participates in Mg(2+) binding. A176 and D177 together coordinate substrate. D177 is a Mg(2+) binding site.

The protein belongs to the HpcH/HpaI aldolase family.

It catalyses the reaction (S)-4-hydroxy-2-oxopentanoate = acetaldehyde + pyruvate. It functions in the pathway xenobiotic degradation; biphenyl degradation. Functionally, catalyzes the reversible retro-aldol cleavage of 4-hydroxy-2-oxovalerate to pyruvate and acetaldehyde. This chain is 4-hydroxy-2-oxovalerate aldolase (bphF), found in Novosphingobium aromaticivorans (Sphingomonas aromaticivorans).